We begin with the raw amino-acid sequence, 593 residues long: Sodium-independent sulfate anion transporter (593 aa).

The Extracellular portion of the chain corresponds to 1–34 (MAPDTCCCSATALRRRLPVLAWVPDYSLQWLRLD). A helical transmembrane segment spans residues 35–55 (FIAGLSVGLTVIPQALAYAEV). A topological domain (cytoplasmic) is located at residue alanine 56. Residues 57–77 (GLPPQYGLYSAFMGCFVYFFL) traverse the membrane as a helical segment. Topologically, residues 78-82 (GTSRD) are extracellular. Residues 83–100 (VTLGPTAIMSLLVSFYTF) traverse the membrane as a helical segment. Residues 101–106 (REPAYA) are Cytoplasmic-facing. Residues 107–127 (VLLAFLSGCIQLAMGLLHLGF) traverse the membrane as a helical segment. Residues 128–176 (LLDFISCPVIKGFTSAASITIGFGQIKNLLGLQKIPRQFFLQVYHTFLH) lie on the Extracellular side of the membrane. The chain crosses the membrane as a helical span at residues 177–197 (IGETRVGDAVLGLASMLLLLV). The Cytoplasmic portion of the chain corresponds to 198–233 (LKCMREHMPPPHPEMPLAVKFSRGLVWTVTTARNAL). A helical transmembrane segment spans residues 234–254 (VVSSAALIAYAFEVTGSHPFV). Topologically, residues 255 to 287 (LTGKIAEGLPPVRIPPFSVTRDNKTISFSEMVQ) are extracellular. A helical membrane pass occupies residues 288–308 (DMGAGLAVVPLMGLLESIAVA). The Cytoplasmic portion of the chain corresponds to 309–324 (KSFASQNNYRIDANQE). A helical membrane pass occupies residues 325-345 (LLAIGLTNVLGSLVSSYPVTG). Topologically, residues 346–361 (SFGRTAVNAQTGVCTP) are extracellular. The chain crosses the membrane as a helical span at residues 362–382 (AGGLVTGALVLLSLNYLTSLF). Serine 383 is a topological domain (cytoplasmic). A helical transmembrane segment spans residues 384 to 404 (YIPKSALAAVIITAVTPLFDV). Over 405–417 (KIFRSLWRVQRLD) the chain is Extracellular. The chain crosses the membrane as a helical span at residues 418-438 (LLPLCVTFLLSFWEIQYGILA). Residues 439–593 (GSLVSLLILL…SSLLKSPSGP (155 aa)) lie on the Cytoplasmic side of the membrane. The STAS domain maps to 453–566 (RPKTQVSEGQ…EEAEKFLQQE (114 aa)). Residues 564-593 (QQEPGTEPNSIHEDAVPEQRSSLLKSPSGP) form a disordered region. Residues 582-593 (QRSSLLKSPSGP) show a composition bias toward polar residues.

This sequence belongs to the SLC26A/SulP transporter (TC 2.A.53) family. In terms of tissue distribution, abundantly expressed in the cerebellum, with a predominant expression in Purkinje cells (at protein level). As to expression, predominantly expressed in the kidney and brain. In the kidney localizes in collecting duct intercalated cells (at protein level). Predominantly expressed in the brain with lower levels in the kidney.

Its subcellular location is the cell membrane. The protein localises to the lysosome membrane. It is found in the apical cell membrane. The protein resides in the basolateral cell membrane. It catalyses the reaction hydrogencarbonate(in) + chloride(out) = hydrogencarbonate(out) + chloride(in). The enzyme catalyses sulfate(in) + H(+)(in) = sulfate(out) + H(+)(out). It carries out the reaction oxalate(in) + chloride(out) = oxalate(out) + chloride(in). Its function is as follows. Sodium-independent anion exchanger mediating bicarbonate, chloride, sulfate and oxalate transport. Exhibits sodium-independent sulfate anion transporter activity that may cooperate with SLC26A2 to mediate DIDS-sensitive sulfate uptake into high endothelial venules endothelial cells (HEVEC). In the kidney, mediates chloride-bicarbonate exchange, facilitating V-ATPase-mediated acid secretion. May function as a chloride channel, playing an important role in moderating chloride homeostasis and neuronal activity in the cerebellum. This chain is Sodium-independent sulfate anion transporter, found in Mus musculus (Mouse).